A 285-amino-acid polypeptide reads, in one-letter code: Inositol oxygenase (285 aa).

A substrate-binding site is contributed by Arg29. Residue Ser33 is modified to Phosphoserine. 85-87 (DES) lines the substrate pocket. His98, His123, and Asp124 together coordinate Fe cation. Substrate is bound by residues Lys127 and 141–142 (GD). The Fe cation site is built by His194, His220, and Asp253. Residue 220 to 221 (HS) coordinates substrate.

Belongs to the myo-inositol oxygenase family. It depends on Fe cation as a cofactor.

It localises to the cytoplasm. The enzyme catalyses myo-inositol + O2 = D-glucuronate + H2O + H(+). It functions in the pathway polyol metabolism; myo-inositol degradation into D-glucuronate; D-glucuronate from myo-inositol: step 1/1. The chain is Inositol oxygenase (MIOX) from Pongo abelii (Sumatran orangutan).